Here is a 274-residue protein sequence, read N- to C-terminus: Orotidine 5'-phosphate decarboxylase (274 aa).

Residue K95 is the Proton donor of the active site.

It belongs to the OMP decarboxylase family. Type 2 subfamily.

The enzyme catalyses orotidine 5'-phosphate + H(+) = UMP + CO2. It functions in the pathway pyrimidine metabolism; UMP biosynthesis via de novo pathway; UMP from orotate: step 2/2. The polypeptide is Orotidine 5'-phosphate decarboxylase (Mycobacterium avium (strain 104)).